We begin with the raw amino-acid sequence, 344 residues long: uncharacterized protein (344 aa).

The disordered stretch occupies residues 304-344 (AVPAPTPRRPLDSVLQIRQTPEKGRNASDRNARETGWFSPP). Residues 323–336 (TPEKGRNASDRNAR) are compositionally biased toward basic and acidic residues.

This is an uncharacterized protein from Mycobacterium tuberculosis (strain CDC 1551 / Oshkosh).